Consider the following 521-residue polypeptide: Envelope glycoprotein (521 aa).

Positions 1-20 (MVDSTIRLVATIFLISLTQQ) are cleaved as a signal peptide. N-linked (GlcNAc...) asparagine; by host glycans are attached at residues Asn44, Asn158, Asn189, and Asn396. Residues 501 to 517 (ISWVVVIGVVLVGVCLM) form a helical membrane-spanning segment.

Homooligomer; disulfide-linked (possibly homodimer).

The protein resides in the virion membrane. In terms of biological role, attaches the virus to host cellular receptor and later induces fusion of virion with host membrane. The chain is Envelope glycoprotein (P4) from Dhori virus (strain Indian/1313/61) (Dho).